The chain runs to 268 residues: Nickel import ATP-binding protein NikE (268 aa).

The 249-residue stretch at 4 to 252 folds into the ABC transporter domain; it reads LNVSDLSHHY…SSDAGRVLQN (249 aa). 45–52 lines the ATP pocket; it reads GRSGCGKS.

This sequence belongs to the ABC transporter superfamily. Nickel importer (TC 3.A.1.5.3) family. In terms of assembly, the complex is composed of two ATP-binding proteins (NikD and NikE), two transmembrane proteins (NikB and NikC) and a solute-binding protein (NikA).

The protein localises to the cell inner membrane. It carries out the reaction Ni(2+)(out) + ATP + H2O = Ni(2+)(in) + ADP + phosphate + H(+). Part of the ABC transporter complex NikABCDE involved in nickel import. Responsible for energy coupling to the transport system. The sequence is that of Nickel import ATP-binding protein NikE from Shigella dysenteriae serotype 1 (strain Sd197).